Consider the following 321-residue polypeptide: Putative ankyrin repeat domain-containing protein 26-like protein (321 aa).

ANK repeat units follow at residues 48–78, 82–111, 115–144, 148–177, and 181–210; these read KHLG…DLDE, KKRT…QLDV, KNRT…DPDL, YGNT…NIES, and DELT…NLTA. Disordered regions lie at residues 222 to 242 and 268 to 321; these read EYKE…GTSN and FNKP…NENI. Residues 229–242 are compositionally biased toward polar residues; that stretch reads PRNPQNSNPEGTSN.

This chain is Putative ankyrin repeat domain-containing protein 26-like protein (ANKRD26P1), found in Homo sapiens (Human).